A 311-amino-acid chain; its full sequence is Oxidoreductase NAD-binding domain-containing protein 1 (311 aa).

The signal sequence occupies residues 1–17; it reads MACAAVMIPGLLRCSVG. Residues 50–186 form the FAD-binding FR-type domain; the sequence is HMERTASVLR…GGVGINPLLS (137 aa). Position 178-183 (178-183) interacts with NAD(+); sequence GVGINP.

The chain is Oxidoreductase NAD-binding domain-containing protein 1 (OXNAD1) from Pongo abelii (Sumatran orangutan).